The sequence spans 256 residues: Distal membrane-arm assembly complex protein 2 (256 aa).

Position 252 is a phosphoserine (Ser-252).

This sequence belongs to the ATP synthase subunit s family. In terms of assembly, interacts with incompletely assembled mitochondrial NADH:ubiquinone oxidoreductase complex (complex I).

It is found in the mitochondrion. Required for the assembly of the mitochondrial NADH:ubiquinone oxidoreductase complex (complex I). Involved in the assembly of the distal region of complex I. The protein is Distal membrane-arm assembly complex protein 2 of Macaca fascicularis (Crab-eating macaque).